A 98-amino-acid chain; its full sequence is Integration host factor subunit alpha (98 aa).

Belongs to the bacterial histone-like protein family. As to quaternary structure, heterodimer of an alpha and a beta chain.

This protein is one of the two subunits of integration host factor, a specific DNA-binding protein that functions in genetic recombination as well as in transcriptional and translational control. This chain is Integration host factor subunit alpha, found in Glaesserella parasuis serovar 5 (strain SH0165) (Haemophilus parasuis).